The primary structure comprises 287 residues: Large ribosomal subunit protein uL2 (287 aa).

2 stretches are compositionally biased toward basic residues: residues 209-220 (GRNRWKARRPKV) and 258-287 (KTRK…GRQS). Residues 209–287 (GRNRWKARRP…SKRSRGGRQS (79 aa)) form a disordered region.

Belongs to the universal ribosomal protein uL2 family. As to quaternary structure, part of the 50S ribosomal subunit. Forms a bridge to the 30S subunit in the 70S ribosome.

Its function is as follows. One of the primary rRNA binding proteins. Required for association of the 30S and 50S subunits to form the 70S ribosome, for tRNA binding and peptide bond formation. It has been suggested to have peptidyltransferase activity; this is somewhat controversial. Makes several contacts with the 16S rRNA in the 70S ribosome. This Acaryochloris marina (strain MBIC 11017) protein is Large ribosomal subunit protein uL2.